We begin with the raw amino-acid sequence, 1567 residues long: Myosin-2A (1567 aa).

The region spanning 4–57 (EVGTRCWYPSKEQGWIGAEVTKNDLKDGTYFMELTLEDNEVVNVETKDLTNEKD) is the Myosin N-terminal SH3-like domain. The 717-residue stretch at 70–786 (ESTEDLTTLS…MLAYFEKLRS (717 aa)) folds into the Myosin motor domain. An ATP-binding site is contributed by 164 to 171 (GESGAGKT). The segment at 446 to 526 (FIGVLDIYGF…LGILSLLDEE (81 aa)) is actin-binding. The tract at residues 619–640 (EEAKKNAASQDQKQLKKPTPIR) is disordered. IQ domains are found at residues 789–818 (MNSAIVLIQKHIRSKYYRKQYMLMKASLSL), 812–836 (MKASLSLLGAYSKGTVIRQRVEYEL), 837–859 (EQHAATLIQTMYRGYSKRSYISG), 860–884 (VISSIVKLQSRIREELEQREMQSKY), 885–907 (ESNAAISIQSRIRAFVPRKAYES), and 908–937 (KRRDTIVVQSLIRRRIAQRDFKKLKADAKS). A coiled-coil region spans residues 947-1091 (KLENKVIQLT…LAHLQTSIAL (145 aa)). Positions 1092 to 1567 (GTVTTNTNIV…VAQQVTVPDA (476 aa)) are non alpha-helical, tail domain. Positions 1230-1505 (AQVLTTIQKV…LKYVADIVKK (276 aa)) constitute a Dilute domain.

This sequence belongs to the TRAFAC class myosin-kinesin ATPase superfamily. Myosin family. In terms of assembly, homodimer. Interacts with calmodulin (CMD1) and the myosin light chain MLC1 through its IQ repeats.

Its function is as follows. Myosin heavy chain that is required for the cell cycle-regulated transport of various organelles and proteins for their segregation. Functions by binding with its tail domain to receptor proteins on organelles and exerting force with its N-terminal motor domain against actin filaments, thereby transporting its cargo along polarized actin cables. In Naumovozyma castellii (Yeast), this protein is Myosin-2A (MYO2A).